Reading from the N-terminus, the 727-residue chain is Elongation factor 2 (727 aa).

Positions 19-260 (DQIRNMGICA…MAIKHLPNPL (242 aa)) constitute a tr-type G domain. GTP contacts are provided by residues 28-35 (AHIDHGKT), 94-98 (DTPGH), and 148-151 (NKVD). Histidine 603 is modified (diphthamide).

The protein belongs to the TRAFAC class translation factor GTPase superfamily. Classic translation factor GTPase family. EF-G/EF-2 subfamily.

It localises to the cytoplasm. In terms of biological role, catalyzes the GTP-dependent ribosomal translocation step during translation elongation. During this step, the ribosome changes from the pre-translocational (PRE) to the post-translocational (POST) state as the newly formed A-site-bound peptidyl-tRNA and P-site-bound deacylated tRNA move to the P and E sites, respectively. Catalyzes the coordinated movement of the two tRNA molecules, the mRNA and conformational changes in the ribosome. The chain is Elongation factor 2 (fusA) from Methanococcus vannielii (strain ATCC 35089 / DSM 1224 / JCM 13029 / OCM 148 / SB).